A 237-amino-acid polypeptide reads, in one-letter code: MQKQEMLYKGKAKSVYETEDNDLLILHFRDDTSALDGKRIEQLARKGVVNNRFNAFIMQKLADAGIETHFEKQLSDDEVLVKRLDMIPVECVVRNFAAGSLVRRLGLEEGQALTPPTYELFYKDDALGDPMVNESISISLGWATDAQLAKMKELSHQVNEVLTALFDAGDLILVDFKLEFGVFHDRIILGDEFSPDGCRIWDKATKKKLDKDRFRQSLGDVIEAYEEVASRIGVPLS.

The protein belongs to the SAICAR synthetase family.

The enzyme catalyses 5-amino-1-(5-phospho-D-ribosyl)imidazole-4-carboxylate + L-aspartate + ATP = (2S)-2-[5-amino-1-(5-phospho-beta-D-ribosyl)imidazole-4-carboxamido]succinate + ADP + phosphate + 2 H(+). The protein operates within purine metabolism; IMP biosynthesis via de novo pathway; 5-amino-1-(5-phospho-D-ribosyl)imidazole-4-carboxamide from 5-amino-1-(5-phospho-D-ribosyl)imidazole-4-carboxylate: step 1/2. The polypeptide is Phosphoribosylaminoimidazole-succinocarboxamide synthase (Psychrobacter arcticus (strain DSM 17307 / VKM B-2377 / 273-4)).